The sequence spans 133 residues: ATP synthase epsilon chain, chloroplastic (133 aa).

This sequence belongs to the ATPase epsilon chain family. F-type ATPases have 2 components, CF(1) - the catalytic core - and CF(0) - the membrane proton channel. CF(1) has five subunits: alpha(3), beta(3), gamma(1), delta(1), epsilon(1). CF(0) has three main subunits: a, b and c.

Its subcellular location is the plastid. It is found in the chloroplast thylakoid membrane. Its function is as follows. Produces ATP from ADP in the presence of a proton gradient across the membrane. The protein is ATP synthase epsilon chain, chloroplastic of Trieres chinensis (Marine centric diatom).